Here is an 827-residue protein sequence, read N- to C-terminus: DNA ligase (827 aa).

NAD(+)-binding positions include 45 to 49, 94 to 95, and glutamate 128; these read DAAYD and SL. Lysine 130 acts as the N6-AMP-lysine intermediate in catalysis. Positions 151, 188, 304, and 328 each coordinate NAD(+). 4 residues coordinate Zn(2+): cysteine 451, cysteine 454, cysteine 475, and cysteine 481. A BRCT domain is found at 748-827; that stretch reads AAAAAFSGRT…AEWLAMVEAA (80 aa).

Belongs to the NAD-dependent DNA ligase family. LigA subfamily. Mg(2+) serves as cofactor. Mn(2+) is required as a cofactor.

It carries out the reaction NAD(+) + (deoxyribonucleotide)n-3'-hydroxyl + 5'-phospho-(deoxyribonucleotide)m = (deoxyribonucleotide)n+m + AMP + beta-nicotinamide D-nucleotide.. In terms of biological role, DNA ligase that catalyzes the formation of phosphodiester linkages between 5'-phosphoryl and 3'-hydroxyl groups in double-stranded DNA using NAD as a coenzyme and as the energy source for the reaction. It is essential for DNA replication and repair of damaged DNA. The chain is DNA ligase from Methylobacterium sp. (strain 4-46).